Consider the following 303-residue polypeptide: Sulfate adenylyltransferase subunit 2 (303 aa).

Belongs to the PAPS reductase family. CysD subfamily. Heterodimer composed of CysD, the smaller subunit, and CysN.

The enzyme catalyses sulfate + ATP + H(+) = adenosine 5'-phosphosulfate + diphosphate. It participates in sulfur metabolism; hydrogen sulfide biosynthesis; sulfite from sulfate: step 1/3. Its function is as follows. With CysN forms the ATP sulfurylase (ATPS) that catalyzes the adenylation of sulfate producing adenosine 5'-phosphosulfate (APS) and diphosphate, the first enzymatic step in sulfur assimilation pathway. APS synthesis involves the formation of a high-energy phosphoric-sulfuric acid anhydride bond driven by GTP hydrolysis by CysN coupled to ATP hydrolysis by CysD. The polypeptide is Sulfate adenylyltransferase subunit 2 (Phocaeicola vulgatus (strain ATCC 8482 / DSM 1447 / JCM 5826 / CCUG 4940 / NBRC 14291 / NCTC 11154) (Bacteroides vulgatus)).